The sequence spans 183 residues: ATP synthase subunit delta (183 aa).

Belongs to the ATPase delta chain family. F-type ATPases have 2 components, F(1) - the catalytic core - and F(0) - the membrane proton channel. F(1) has five subunits: alpha(3), beta(3), gamma(1), delta(1), epsilon(1). CF(0) has four main subunits: a(1), b(1), b'(1) and c(10-14). The alpha and beta chains form an alternating ring which encloses part of the gamma chain. F(1) is attached to F(0) by a central stalk formed by the gamma and epsilon chains, while a peripheral stalk is formed by the delta, b and b' chains.

It localises to the cellular thylakoid membrane. In terms of biological role, f(1)F(0) ATP synthase produces ATP from ADP in the presence of a proton or sodium gradient. F-type ATPases consist of two structural domains, F(1) containing the extramembraneous catalytic core and F(0) containing the membrane proton channel, linked together by a central stalk and a peripheral stalk. During catalysis, ATP synthesis in the catalytic domain of F(1) is coupled via a rotary mechanism of the central stalk subunits to proton translocation. Its function is as follows. This protein is part of the stalk that links CF(0) to CF(1). It either transmits conformational changes from CF(0) to CF(1) or is implicated in proton conduction. The protein is ATP synthase subunit delta of Prochlorococcus marinus (strain SARG / CCMP1375 / SS120).